We begin with the raw amino-acid sequence, 487 residues long: MTFTASQLLALLPLLLTTGAMVALMLAIAWKRCDDTAFVVTIAGLNLALFSLPIVMAQGDQGVTPLLQIDGYAVFYMGLVLIGALATCTFGRSWLKGYPDNREEFYLLLLIATAGGLVLAGSRHLASLFIGIEMLTLPMFGLVGYAYRERHSLEASIKYMVLSAAATAFLLFGMALLYAQAGSLSFSDLGLTLATTPAHHPLLMGGLGLMLVGFAFKLSLAPFHLWTPDVYEGAPAPVATFLATVSKIAVFCVLLRFYLAVPAAADPMIHWLLAAMAVISIVIGNLLALLQTNIKRMMGYSSISHFGYLLAVIVASRLGQMPVEAAGVYLLMYLFTSLGAFGVISMMSSPYRGKDADSLHSYRGLFWRRPYLTAVLTVMMLSLAGIPMTLGFIGKFYLIGVTVDAKLWWLSGAIVLGSALGLYYYLRVMVTLYLREPGMQLRDAKGDWAITSGGLVVLLSAALVVALGLYPQPVISLVQGFQNVVLH.

14 consecutive transmembrane segments (helical) span residues 8–28 (LLALLPLLLTTGAMVALMLAI), 37–57 (AFVVTIAGLNLALFSLPIVMA), 71–91 (GYAVFYMGLVLIGALATCTFG), 104–124 (EFYLLLLIATAGGLVLAGSRH), 125–145 (LASLFIGIEMLTLPMFGLVGY), 159–179 (YMVLSAAATAFLLFGMALLYA), 203–223 (LMGGLGLMLVGFAFKLSLAPF), 235–255 (PAPVATFLATVSKIAVFCVLL), 269–289 (IHWLLAAMAVISIVIGNLLAL), 303–323 (ISHFGYLLAVIVASRLGQMPV), 327–347 (GVYLLMYLFTSLGAFGVISMM), 374–394 (AVLTVMMLSLAGIPMTLGFIG), 408–427 (WWLSGAIVLGSALGLYYYLR), and 449–469 (AITSGGLVVLLSAALVVALGL).

This sequence belongs to the complex I subunit 2 family. As to quaternary structure, NDH-1 is composed of 14 different subunits. Subunits NuoA, H, J, K, L, M, N constitute the membrane sector of the complex.

The protein localises to the cell inner membrane. It carries out the reaction a quinone + NADH + 5 H(+)(in) = a quinol + NAD(+) + 4 H(+)(out). NDH-1 shuttles electrons from NADH, via FMN and iron-sulfur (Fe-S) centers, to quinones in the respiratory chain. The immediate electron acceptor for the enzyme in this species is believed to be ubiquinone. Couples the redox reaction to proton translocation (for every two electrons transferred, four hydrogen ions are translocated across the cytoplasmic membrane), and thus conserves the redox energy in a proton gradient. The protein is NADH-quinone oxidoreductase subunit N of Aeromonas hydrophila subsp. hydrophila (strain ATCC 7966 / DSM 30187 / BCRC 13018 / CCUG 14551 / JCM 1027 / KCTC 2358 / NCIMB 9240 / NCTC 8049).